The sequence spans 130 residues: MRHYEIVFMVHPDQSEQVPGMIERYSGVITAANGTIHRLEDWGRRQLAYPIQDLHKAHYVLMNVEATAESIEELETAFRFNDAVLRNMVMRTKVAVTEASPMAKARDERDSRRSPSDDRIEEESAEENAE.

The interval 96-130 is disordered; sequence VTEASPMAKARDERDSRRSPSDDRIEEESAEENAE. The span at 104–118 shows a compositional bias: basic and acidic residues; that stretch reads KARDERDSRRSPSDD. The segment covering 119–130 has biased composition (acidic residues); that stretch reads RIEEESAEENAE.

The protein belongs to the bacterial ribosomal protein bS6 family.

Functionally, binds together with bS18 to 16S ribosomal RNA. This Shewanella denitrificans (strain OS217 / ATCC BAA-1090 / DSM 15013) protein is Small ribosomal subunit protein bS6.